A 555-amino-acid chain; its full sequence is Glutamine--tRNA ligase (555 aa).

The short motif at 34–44 (PEPNGYLHIGH) is the 'HIGH' region element. Residues 35-37 (EPN) and 41-47 (HIGHAKS) contribute to the ATP site. L-glutamine-binding residues include Asp-67 and Tyr-212. Residues Thr-231, 261–262 (RL), and 269–271 (MSK) contribute to the ATP site. The 'KMSKS' region motif lies at 268-272 (IMSKR).

Belongs to the class-I aminoacyl-tRNA synthetase family. Monomer.

It is found in the cytoplasm. The catalysed reaction is tRNA(Gln) + L-glutamine + ATP = L-glutaminyl-tRNA(Gln) + AMP + diphosphate. In Yersinia pseudotuberculosis serotype O:3 (strain YPIII), this protein is Glutamine--tRNA ligase.